Reading from the N-terminus, the 718-residue chain is DNA ligase (718 aa).

Residues 44-48 (DADYD), 93-94 (SL), and Glu127 each bind NAD(+). The active-site N6-AMP-lysine intermediate is Lys129. Residues Arg150, Glu186, Lys302, and Lys326 each coordinate NAD(+). Positions 432, 435, 456, and 462 each coordinate Zn(2+). The BRCT domain maps to 640 to 718 (TAGSPVAGKT…EDEWLALISG (79 aa)).

This sequence belongs to the NAD-dependent DNA ligase family. LigA subfamily. The cofactor is Mg(2+). Mn(2+) is required as a cofactor.

It carries out the reaction NAD(+) + (deoxyribonucleotide)n-3'-hydroxyl + 5'-phospho-(deoxyribonucleotide)m = (deoxyribonucleotide)n+m + AMP + beta-nicotinamide D-nucleotide.. Its function is as follows. DNA ligase that catalyzes the formation of phosphodiester linkages between 5'-phosphoryl and 3'-hydroxyl groups in double-stranded DNA using NAD as a coenzyme and as the energy source for the reaction. It is essential for DNA replication and repair of damaged DNA. In Rhizobium etli (strain CIAT 652), this protein is DNA ligase.